The primary structure comprises 207 residues: Ribosomal RNA small subunit methyltransferase G (207 aa).

Residues Gly73, Leu78, Val124–Glu125, and Arg139 contribute to the S-adenosyl-L-methionine site.

The protein belongs to the methyltransferase superfamily. RNA methyltransferase RsmG family.

The protein resides in the cytoplasm. It catalyses the reaction guanosine(527) in 16S rRNA + S-adenosyl-L-methionine = N(7)-methylguanosine(527) in 16S rRNA + S-adenosyl-L-homocysteine. Its function is as follows. Specifically methylates the N7 position of guanine in position 527 of 16S rRNA. The polypeptide is Ribosomal RNA small subunit methyltransferase G (Cronobacter sakazakii (strain ATCC BAA-894) (Enterobacter sakazakii)).